Consider the following 240-residue polypeptide: 1-(5-phosphoribosyl)-5-[(5-phosphoribosylamino)methylideneamino] imidazole-4-carboxamide isomerase (240 aa).

Residue D8 is the Proton acceptor of the active site. D129 acts as the Proton donor in catalysis.

This sequence belongs to the HisA/HisF family.

Its subcellular location is the cytoplasm. The catalysed reaction is 1-(5-phospho-beta-D-ribosyl)-5-[(5-phospho-beta-D-ribosylamino)methylideneamino]imidazole-4-carboxamide = 5-[(5-phospho-1-deoxy-D-ribulos-1-ylimino)methylamino]-1-(5-phospho-beta-D-ribosyl)imidazole-4-carboxamide. It participates in amino-acid biosynthesis; L-histidine biosynthesis; L-histidine from 5-phospho-alpha-D-ribose 1-diphosphate: step 4/9. The sequence is that of 1-(5-phosphoribosyl)-5-[(5-phosphoribosylamino)methylideneamino] imidazole-4-carboxamide isomerase from Dinoroseobacter shibae (strain DSM 16493 / NCIMB 14021 / DFL 12).